We begin with the raw amino-acid sequence, 598 residues long: Glutamyl-tRNA(Gln) amidotransferase subunit E (598 aa).

It belongs to the GatB/GatE family. GatE subfamily. Heterodimer of GatD and GatE.

It carries out the reaction L-glutamyl-tRNA(Gln) + L-glutamine + ATP + H2O = L-glutaminyl-tRNA(Gln) + L-glutamate + ADP + phosphate + H(+). Its function is as follows. Allows the formation of correctly charged Gln-tRNA(Gln) through the transamidation of misacylated Glu-tRNA(Gln) in organisms which lack glutaminyl-tRNA synthetase. The reaction takes place in the presence of glutamine and ATP through an activated gamma-phospho-Glu-tRNA(Gln). The GatDE system is specific for glutamate and does not act on aspartate. This Thermoplasma volcanium (strain ATCC 51530 / DSM 4299 / JCM 9571 / NBRC 15438 / GSS1) protein is Glutamyl-tRNA(Gln) amidotransferase subunit E.